Consider the following 360-residue polypeptide: Isopentenyl-diphosphate delta-isomerase (360 aa).

6 to 7 (RK) lines the substrate pocket. FMN is bound by residues Thr62, 63–65 (GMT), Ser93, and Asn122. 93–95 (SQR) is a substrate binding site. Gln157 is a substrate binding site. A Mg(2+)-binding site is contributed by Glu158. Residues Lys189, Ser214, Thr219, 272–274 (GIR), and 293–294 (AL) contribute to the FMN site.

It belongs to the IPP isomerase type 2 family. In terms of assembly, homooctamer. Dimer of tetramers. It depends on FMN as a cofactor. The cofactor is NADPH. Mg(2+) is required as a cofactor.

The protein resides in the cytoplasm. It catalyses the reaction isopentenyl diphosphate = dimethylallyl diphosphate. In terms of biological role, involved in the biosynthesis of isoprenoids. Catalyzes the 1,3-allylic rearrangement of the homoallylic substrate isopentenyl (IPP) to its allylic isomer, dimethylallyl diphosphate (DMAPP). The sequence is that of Isopentenyl-diphosphate delta-isomerase from Ignicoccus hospitalis (strain KIN4/I / DSM 18386 / JCM 14125).